A 197-amino-acid polypeptide reads, in one-letter code: UPF0200 protein MJ1399 (197 aa).

Position 8–15 (8–15) interacts with ATP; the sequence is GMPGAGKS.

The protein belongs to the UPF0200 family.

The chain is UPF0200 protein MJ1399 from Methanocaldococcus jannaschii (strain ATCC 43067 / DSM 2661 / JAL-1 / JCM 10045 / NBRC 100440) (Methanococcus jannaschii).